A 385-amino-acid chain; its full sequence is Type III polyketide synthase C (385 aa).

56–63 (KLQHLCKS) contributes to the CoA binding site. Cys165 acts as the Nucleophile in catalysis. Residue 217–218 (GD) coordinates substrate. CoA-binding positions include Leu267, 307–310 (GGPA), and Ala310.

It belongs to the thiolase-like superfamily. Chalcone/stilbene synthases family. Homodimer.

The protein localises to the endoplasmic reticulum. It participates in secondary metabolite biosynthesis; flavonoid biosynthesis. Functionally, plant type III polyketide synthases (PKSs) that catalyzes the condensation of malonyl-CoA units with various CoA ester starter molecules to generate a diverse array of natural products including long-chain alkyl alpha-pyrones. This chain is Type III polyketide synthase C, found in Arabidopsis thaliana (Mouse-ear cress).